The chain runs to 596 residues: Protein kinase C iota type (596 aa).

Polar residues predominate over residues Met1–His12. Residues Met1–Asp21 are disordered. At Pro2 the chain carries N-acetylproline. Positions Pro2–Val28 are required for interaction with RAB2. The interval Pro2 to Asp253 is regulatory domain. Position 3 is a phosphothreonine (Thr3). A phosphoserine mark is found at Ser7 and Ser8. At Thr9 the chain carries Phosphothreonine. The PB1 domain maps to Gln25–Cys108. Residues Asp72–Arg91 form an interaction with PARD6A region. Positions Tyr125–Lys134 match the Pseudosubstrate motif. A Phorbol-ester/DAG-type zinc finger spans residues Gly140–Cys190. Residues Phe254–Phe522 enclose the Protein kinase domain. Ile260 to Val268 contacts ATP. Tyr265 and Tyr280 each carry phosphotyrosine; by SRC. Residue Lys283 coordinates ATP. At Tyr334 the chain carries Phosphotyrosine; by SRC. Asp378 serves as the catalytic Proton acceptor. Phosphothreonine; by PDPK1 is present on Thr412. The region spanning Arg523–Glu594 is the AGC-kinase C-terminal domain. A Phosphothreonine modification is found at Thr564.

It belongs to the protein kinase superfamily. AGC Ser/Thr protein kinase family. PKC subfamily. Forms a complex with SQSTM1 and MP2K5. Interacts directly with SQSTM1. Interacts with IKBKB. Interacts with PARD6A, PARD6B and PARD6G. Part of a quaternary complex containing aPKC, PARD3, a PARD6 protein (PARD6A, PARD6B or PARD6G) and a GTPase protein (CDC42 or RAC1). Part of a complex with LLGL1 and PARD6B. Interacts with ADAP1/CENTA1. Interaction with SMG1, through the ZN-finger domain, activates the kinase activity. Interacts with CDK7. Forms a complex with RAB2A and GAPDH involved in recruitment onto the membrane of vesicular tubular clusters (VTCs). Interacts with ECT2 ('Thr-359' phosphorylated form). Interacts with VAMP2. Interacts with WDFY2 (via WD repeats 1-3). Phosphorylation at Thr-412 in the activation loop is not mandatory for activation. Upon neuronal growth factor (NGF) stimulation, phosphorylated by SRC at Tyr-265, Tyr-280 and Tyr-334. Phosphorylation at Tyr-265 facilitates binding to KPNB1/importin-beta regulating entry of PRKCI into the nucleus. Phosphorylation on Tyr-334 is important for NF-kappa-B stimulation. Phosphorylated at Thr-564 during the initial phase of long term potentiation. Expressed in dorsal hippocampus (at protein level).

It localises to the cytoplasm. It is found in the membrane. Its subcellular location is the endosome. The protein resides in the nucleus. The catalysed reaction is L-seryl-[protein] + ATP = O-phospho-L-seryl-[protein] + ADP + H(+). The enzyme catalyses L-threonyl-[protein] + ATP = O-phospho-L-threonyl-[protein] + ADP + H(+). With respect to regulation, atypical PKCs (PRKCI and PRKCZ) exhibit an elevated basal enzymatic activity (that may be due to the interaction with SMG1 or SQSTM1) and are not regulated by diacylglycerol, phosphatidylserine, phorbol esters or calcium ions. Two specific sites, Thr-412 (activation loop of the kinase domain) and Thr-564 (turn motif), need to be phosphorylated for its full activation. Might also be a target for novel lipid activators that are elevated during nutrient-stimulated insulin secretion. Calcium- and diacylglycerol-independent serine/ threonine-protein kinase that plays a general protective role against apoptotic stimuli, is involved in NF-kappa-B activation, cell survival, differentiation and polarity, and contributes to the regulation of microtubule dynamics in the early secretory pathway. Is necessary for BCR-ABL oncogene-mediated resistance to apoptotic drug in leukemia cells, protecting leukemia cells against drug-induced apoptosis. In cultured neurons, prevents amyloid beta protein-induced apoptosis by interrupting cell death process at a very early step. In glioblastoma cells, may function downstream of phosphatidylinositol 3-kinase (PI3K) and PDPK1 in the promotion of cell survival by phosphorylating and inhibiting the pro-apoptotic factor BAD. Can form a protein complex in non-small cell lung cancer (NSCLC) cells with PARD6A and ECT2 and regulate ECT2 oncogenic activity by phosphorylation, which in turn promotes transformed growth and invasion. In response to nerve growth factor (NGF), acts downstream of SRC to phosphorylate and activate IRAK1, allowing the subsequent activation of NF-kappa-B and neuronal cell survival. Functions in the organization of the apical domain in epithelial cells by phosphorylating EZR. This step is crucial for activation and normal distribution of EZR at the early stages of intestinal epithelial cell differentiation. Forms a protein complex with LLGL1 and PARD6B independently of PARD3 to regulate epithelial cell polarity. Plays a role in microtubule dynamics in the early secretory pathway through interaction with RAB2A and GAPDH and recruitment to vesicular tubular clusters (VTCs). In human coronary artery endothelial cells (HCAEC), is activated by saturated fatty acids and mediates lipid-induced apoptosis. Downstream of PI3K is required for insulin-stimulated glucose transport. Activates RAB4A and promotes its association with KIF3A which is required for the insulin-induced SLC2A4/GLUT4 translocation in adipocytes. Is essential in early embryogenesis and development of differentiating photoreceptors by playing a role in the establishment of epithelial and neuronal polarity. Involved in early synaptic long term potentiation phase in CA1 hippocampal cells and short term memory formation. In Rattus norvegicus (Rat), this protein is Protein kinase C iota type (Prkci).